Reading from the N-terminus, the 354-residue chain is Hyaluronan and proteoglycan link protein 1 (354 aa).

A propeptide spanning residues 1-15 is cleaved from the precursor; sequence MKSLLLLVLISICWA. 2 N-linked (GlcNAc...) asparagine glycosylation sites follow: asparagine 21 and asparagine 56. One can recognise an Ig-like V-type domain in the interval 38 to 152; the sequence is PHLLVEAEQA…EGLEDDTVVV (115 aa). Intrachain disulfides connect cysteine 61–cysteine 139, cysteine 181–cysteine 252, cysteine 205–cysteine 226, cysteine 279–cysteine 349, and cysteine 304–cysteine 325. 2 Link domains span residues 159-254 and 259-351; these read VVFP…FCFT and GRFY…YCFR.

Belongs to the HAPLN family. Widely expressed. Weakly expressed in the brain.

Its subcellular location is the secreted. It is found in the extracellular space. The protein localises to the extracellular matrix. Stabilizes the aggregates of proteoglycan monomers with hyaluronic acid in the extracellular cartilage matrix. The protein is Hyaluronan and proteoglycan link protein 1 (HAPLN1) of Homo sapiens (Human).